The primary structure comprises 334 residues: rRNA 2'-O-methyltransferase fibrillarin (334 aa).

Gly residues predominate over residues 1–93; it reads MEGRGGSRGG…GGKPAAGGKP (93 aa). The tract at residues 1–94 is disordered; sequence MEGRGGSRGG…GKPAAGGKPG (94 aa). S-adenosyl-L-methionine contacts are provided by residues 184–185, 203–204, 228–229, and 248–251; these read TT, EL, DA, and DVAQ.

It belongs to the methyltransferase superfamily. Fibrillarin family. In terms of assembly, component of box C/D small nucleolar ribonucleoprotein (snoRNP) particles. It is associated with the U3, U8 and U13 small nuclear RNAs. Part of the small subunit (SSU) processome, composed of more than 70 proteins and the RNA chaperone small nucleolar RNA (snoRNA) U3. In terms of processing, by homology to other fibrillarins, some or all of the N-terminal domain arginines are modified to asymmetric dimethylarginine (DMA).

The protein resides in the nucleus. The protein localises to the nucleolus. The enzyme catalyses L-glutaminyl-[histone H2A] + S-adenosyl-L-methionine = N(5)-methyl-L-glutaminyl-[histone H2A] + S-adenosyl-L-homocysteine + H(+). S-adenosyl-L-methionine-dependent methyltransferase that has the ability to methylate both RNAs and proteins. Involved in pre-rRNA processing. Utilizes the methyl donor S-adenosyl-L-methionine to catalyze the site-specific 2'-hydroxyl methylation of ribose moieties in pre-ribosomal RNA. Site specificity is provided by a guide RNA that base pairs with the substrate. Methylation occurs at a characteristic distance from the sequence involved in base pairing with the guide RNA. Also acts as a protein methyltransferase by mediating methylation of 'Gln-105' of histone H2A (H2AQ105me), a modification that impairs binding of the FACT complex and is specifically present at 35S ribosomal DNA locus. Part of the small subunit (SSU) processome, first precursor of the small eukaryotic ribosomal subunit. During the assembly of the SSU processome in the nucleolus, many ribosome biogenesis factors, an RNA chaperone and ribosomal proteins associate with the nascent pre-rRNA and work in concert to generate RNA folding, modifications, rearrangements and cleavage as well as targeted degradation of pre-ribosomal RNA by the RNA exosome. This chain is rRNA 2'-O-methyltransferase fibrillarin (fbl), found in Dictyostelium discoideum (Social amoeba).